We begin with the raw amino-acid sequence, 346 residues long: Dimethyladenosine transferase 1, mitochondrial (346 aa).

Residues 1–27 constitute a mitochondrion transit peptide; it reads MAASGKLSTCRLPPLPTIREIIKLLRL. S-adenosyl-L-methionine contacts are provided by L38, G63, E85, K86, D111, V112, and N141.

It belongs to the class I-like SAM-binding methyltransferase superfamily. rRNA adenine N(6)-methyltransferase family. KsgA subfamily. As to quaternary structure, interacts with mitochondrial RNA polymerase POLRMT. Interacts with TFAM. Bound to the maturing mtSSU until the late stages of assembly. In terms of tissue distribution, ubiquitously expressed.

It is found in the mitochondrion. The enzyme catalyses adenosine(N)/adenosine(N+1) in rRNA + 4 S-adenosyl-L-methionine = N(6)-dimethyladenosine(N)/N(6)-dimethyladenosine(N+1) in rRNA + 4 S-adenosyl-L-homocysteine + 4 H(+). Mitochondrial methyltransferase which uses S-adenosyl methionine to dimethylate two highly conserved adjacent adenosine residues (A1583 and A1584) within the loop of helix 45 at the 3-prime end of 12S rRNA, thereby regulating the assembly or stability of the small subunit of the mitochondrial ribosome. Also required for basal transcription of mitochondrial DNA, probably via its interaction with POLRMT and TFAM. Stimulates transcription independently of the methyltransferase activity. This Homo sapiens (Human) protein is Dimethyladenosine transferase 1, mitochondrial.